The primary structure comprises 454 residues: MALNVVILAAGKGTRMRSDLPKVLHPIAHKSMVQHVIDTAYQVGSDAIQLVYGYGADKLQARLGEQQLNWVLQAEQLGTGHAVAQASANIADDDTVLILYGDVPLIQASTLEALLAAREENGLAILTVNLPNPTGYGRIVREGGSVVGIIEQKDANTEQLAINEINTGIMAAPGKQLKAWLGQLSSDNAQGEYYLTDIVAMAHRDGVAITTAQPESAVEVEGANNRVQLAQLERAYQARAAEKLMLEGANLRDPARIDIRGDVTVGMDVMIDVNVVIEGKVTIGNNVTIGAGVILIDCDISDNAVIKPYSIIESAKVGVDASAGPFARLRPGAELKEDAHIGNFVEMKKAVLGKGSKAGHLAYIGDATIGSGVNIGAGTITCNYDGANKFQTIIEDNVFVGSDTQLVAPVTIGKGATLGAGSTITKDVAENELVITRVKQRHLTGWPRPVKLKK.

The interval 1 to 226 (MALNVVILAA…AVEVEGANNR (226 aa)) is pyrophosphorylase. Residues 8–11 (LAAG), K22, Q73, 78–79 (GT), 100–102 (YGD), G137, E151, N166, and N224 each bind UDP-N-acetyl-alpha-D-glucosamine. Mg(2+) is bound at residue D102. N224 contributes to the Mg(2+) binding site. Residues 227-247 (VQLAQLERAYQARAAEKLMLE) are linker. Residues 248–454 (GANLRDPARI…GWPRPVKLKK (207 aa)) are N-acetyltransferase. Positions 330 and 348 each coordinate UDP-N-acetyl-alpha-D-glucosamine. H360 serves as the catalytic Proton acceptor. Residues Y363 and N374 each contribute to the UDP-N-acetyl-alpha-D-glucosamine site. Residues A377, 383–384 (NY), S402, A420, and R437 each bind acetyl-CoA.

In the N-terminal section; belongs to the N-acetylglucosamine-1-phosphate uridyltransferase family. This sequence in the C-terminal section; belongs to the transferase hexapeptide repeat family. As to quaternary structure, homotrimer. It depends on Mg(2+) as a cofactor.

The protein resides in the cytoplasm. The enzyme catalyses alpha-D-glucosamine 1-phosphate + acetyl-CoA = N-acetyl-alpha-D-glucosamine 1-phosphate + CoA + H(+). It carries out the reaction N-acetyl-alpha-D-glucosamine 1-phosphate + UTP + H(+) = UDP-N-acetyl-alpha-D-glucosamine + diphosphate. The protein operates within nucleotide-sugar biosynthesis; UDP-N-acetyl-alpha-D-glucosamine biosynthesis; N-acetyl-alpha-D-glucosamine 1-phosphate from alpha-D-glucosamine 6-phosphate (route II): step 2/2. It functions in the pathway nucleotide-sugar biosynthesis; UDP-N-acetyl-alpha-D-glucosamine biosynthesis; UDP-N-acetyl-alpha-D-glucosamine from N-acetyl-alpha-D-glucosamine 1-phosphate: step 1/1. Its pathway is bacterial outer membrane biogenesis; LPS lipid A biosynthesis. Catalyzes the last two sequential reactions in the de novo biosynthetic pathway for UDP-N-acetylglucosamine (UDP-GlcNAc). The C-terminal domain catalyzes the transfer of acetyl group from acetyl coenzyme A to glucosamine-1-phosphate (GlcN-1-P) to produce N-acetylglucosamine-1-phosphate (GlcNAc-1-P), which is converted into UDP-GlcNAc by the transfer of uridine 5-monophosphate (from uridine 5-triphosphate), a reaction catalyzed by the N-terminal domain. The protein is Bifunctional protein GlmU of Shewanella pealeana (strain ATCC 700345 / ANG-SQ1).